Here is a 244-residue protein sequence, read N- to C-terminus: Protein YIPF4 (244 aa).

Residues 1–113 are Cytoplasmic-facing; the sequence is MQPPGPPPAY…FNRQVVRDNP (113 aa). The chain crosses the membrane as a helical span at residues 114–134; it reads DFWGPLAVVLFFSMISLYGQF. Residues 135–138 are Extracellular-facing; it reads RVVS. The chain crosses the membrane as a helical span at residues 139–159; that stretch reads WIITIWIFGSLTIFLLARVLG. The Cytoplasmic segment spans residues 160–166; sequence GEVAYGQ. The chain crosses the membrane as a helical span at residues 167-187; it reads VLGVIGYSLLPLIVIAPVLLV. At 188–195 the chain is on the extracellular side; sequence VGSFEVVS. The helical transmembrane segment at 196–216 threads the bilayer; that stretch reads TLIKLFGVFWAAYSAASLLVG. Topologically, residues 217-223 are cytoplasmic; that stretch reads EEFKTKK. The chain crosses the membrane as a helical span at residues 224-244; that stretch reads PLLIYPIFLLYIYFLSLYTGV.

It belongs to the YIP1 family. In terms of assembly, interacts with YIPF3 and YIPF5. (Microbial infection) Interacts with human papillomavirus (HPV) E5 proteins. As to expression, expressed in keratinocytes (at protein level).

It localises to the golgi apparatus. The protein localises to the cis-Golgi network membrane. Its function is as follows. Involved in the maintenance of the Golgi structure. This is Protein YIPF4 (YIPF4) from Homo sapiens (Human).